The chain runs to 417 residues: Serine hydroxymethyltransferase (417 aa).

(6S)-5,6,7,8-tetrahydrofolate-binding positions include L121 and 125-127 (GHL). K229 is modified (N6-(pyridoxal phosphate)lysine). 355–357 (SPF) is a binding site for (6S)-5,6,7,8-tetrahydrofolate.

It belongs to the SHMT family. As to quaternary structure, homodimer. It depends on pyridoxal 5'-phosphate as a cofactor.

It is found in the cytoplasm. It carries out the reaction (6R)-5,10-methylene-5,6,7,8-tetrahydrofolate + glycine + H2O = (6S)-5,6,7,8-tetrahydrofolate + L-serine. The protein operates within one-carbon metabolism; tetrahydrofolate interconversion. Its pathway is amino-acid biosynthesis; glycine biosynthesis; glycine from L-serine: step 1/1. Catalyzes the reversible interconversion of serine and glycine with tetrahydrofolate (THF) serving as the one-carbon carrier. This reaction serves as the major source of one-carbon groups required for the biosynthesis of purines, thymidylate, methionine, and other important biomolecules. Also exhibits THF-independent aldolase activity toward beta-hydroxyamino acids, producing glycine and aldehydes, via a retro-aldol mechanism. The protein is Serine hydroxymethyltransferase of Shewanella baltica (strain OS185).